The sequence spans 527 residues: Probable malate:quinone oxidoreductase (527 aa).

The protein belongs to the MQO family. FAD is required as a cofactor.

It carries out the reaction (S)-malate + a quinone = a quinol + oxaloacetate. It functions in the pathway carbohydrate metabolism; tricarboxylic acid cycle; oxaloacetate from (S)-malate (quinone route): step 1/1. In Pectobacterium carotovorum subsp. carotovorum (strain PC1), this protein is Probable malate:quinone oxidoreductase.